Here is a 474-residue protein sequence, read N- to C-terminus: tRNA-2-methylthio-N(6)-dimethylallyladenosine synthase (474 aa).

The 118-residue stretch at 3–120 (KKLHIKTWGC…LPEMIDQVQR (118 aa)) folds into the MTTase N-terminal domain. Residues C12, C49, C83, C157, C161, and C164 each coordinate [4Fe-4S] cluster. The Radical SAM core domain maps to 143–375 (RADGPTAFVS…QDRITQQAMR (233 aa)). Residues 378 to 441 (RQMLGTVQRI…TNSLRGIFIR (64 aa)) enclose the TRAM domain.

Belongs to the methylthiotransferase family. MiaB subfamily. In terms of assembly, monomer. The cofactor is [4Fe-4S] cluster.

The protein localises to the cytoplasm. It catalyses the reaction N(6)-dimethylallyladenosine(37) in tRNA + (sulfur carrier)-SH + AH2 + 2 S-adenosyl-L-methionine = 2-methylsulfanyl-N(6)-dimethylallyladenosine(37) in tRNA + (sulfur carrier)-H + 5'-deoxyadenosine + L-methionine + A + S-adenosyl-L-homocysteine + 2 H(+). In terms of biological role, catalyzes the methylthiolation of N6-(dimethylallyl)adenosine (i(6)A), leading to the formation of 2-methylthio-N6-(dimethylallyl)adenosine (ms(2)i(6)A) at position 37 in tRNAs that read codons beginning with uridine. This is tRNA-2-methylthio-N(6)-dimethylallyladenosine synthase from Shewanella denitrificans (strain OS217 / ATCC BAA-1090 / DSM 15013).